A 341-amino-acid chain; its full sequence is Ferrochelatase (341 aa).

Positions 189 and 293 each coordinate Fe cation.

The protein belongs to the ferrochelatase family.

The protein localises to the cytoplasm. The catalysed reaction is heme b + 2 H(+) = protoporphyrin IX + Fe(2+). The protein operates within porphyrin-containing compound metabolism; protoheme biosynthesis; protoheme from protoporphyrin-IX: step 1/1. Its function is as follows. Catalyzes the ferrous insertion into protoporphyrin IX. This is Ferrochelatase from Pseudomonas fluorescens (strain Pf0-1).